Here is a 316-residue protein sequence, read N- to C-terminus: Protein PXR1 (316 aa).

The G-patch domain occupies 25 to 71 (TSRFGHQYLERMGWKPGKGLGLVEHATTSHVKVSIKDDNLGLGSKLA). The interval 146–280 (GTTKKRKIDS…DSMLMPKEQL (135 aa)) is disordered. A compositionally biased stretch (basic and acidic residues) spans 179 to 195 (DRKEKEEKKTEKENSEI). A compositionally biased stretch (basic residues) spans 196–209 (KKKKKEKKEKKEKK). Basic and acidic residues predominate over residues 210–240 (EKKDKNEKKEKKDKNEKKEKKDKNEEKEKKE). The span at 241-260 (KKEKKEKKDKKDKKDKKDKK) shows a compositional bias: basic residues. Residues 261 to 270 (EKKEVKEVTR) show a composition bias toward basic and acidic residues.

Belongs to the PINX1 family.

The protein resides in the nucleus. It is found in the nucleolus. Functionally, involved in rRNA-processing at A0, A1 and A2 sites and negatively regulates telomerase. In Debaryomyces hansenii (strain ATCC 36239 / CBS 767 / BCRC 21394 / JCM 1990 / NBRC 0083 / IGC 2968) (Yeast), this protein is Protein PXR1 (PXR1).